The chain runs to 410 residues: uncharacterized protein (410 aa).

11 to 39 contacts NAD(+); it reads VLVIGGGPSGTALSAELAARGLDVQQLAP.

This sequence belongs to the lycopene cyclase family.

This is an uncharacterized protein from Deinococcus radiodurans (strain ATCC 13939 / DSM 20539 / JCM 16871 / CCUG 27074 / LMG 4051 / NBRC 15346 / NCIMB 9279 / VKM B-1422 / R1).